Reading from the N-terminus, the 254-residue chain is 4-hydroxy-tetrahydrodipicolinate reductase (254 aa).

7 to 12 (GASGRI) contributes to the NAD(+) binding site. Arg35 lines the NADP(+) pocket. NAD(+) is bound by residues 91-93 (GTT) and 115-118 (AHNM). The active-site Proton donor/acceptor is His147. His148 serves as a coordination point for (S)-2,3,4,5-tetrahydrodipicolinate. Lys151 (proton donor) is an active-site residue. 157 to 158 (GT) contributes to the (S)-2,3,4,5-tetrahydrodipicolinate binding site.

This sequence belongs to the DapB family.

It localises to the cytoplasm. The catalysed reaction is (S)-2,3,4,5-tetrahydrodipicolinate + NAD(+) + H2O = (2S,4S)-4-hydroxy-2,3,4,5-tetrahydrodipicolinate + NADH + H(+). The enzyme catalyses (S)-2,3,4,5-tetrahydrodipicolinate + NADP(+) + H2O = (2S,4S)-4-hydroxy-2,3,4,5-tetrahydrodipicolinate + NADPH + H(+). It functions in the pathway amino-acid biosynthesis; L-lysine biosynthesis via DAP pathway; (S)-tetrahydrodipicolinate from L-aspartate: step 4/4. In terms of biological role, catalyzes the conversion of 4-hydroxy-tetrahydrodipicolinate (HTPA) to tetrahydrodipicolinate. This Helicobacter pylori (strain HPAG1) protein is 4-hydroxy-tetrahydrodipicolinate reductase.